Reading from the N-terminus, the 375-residue chain is N5-carboxyaminoimidazole ribonucleotide synthase (375 aa).

Residues arginine 108, lysine 148, 153–159 (GYDGKGQ), 183–186 (EQYL), glutamate 191, histidine 214, and 266–267 (NE) each bind ATP. An ATP-grasp domain is found at 112 to 296 (KQTLLEANTQ…QFDTHILAIT (185 aa)).

Belongs to the PurK/PurT family. Homodimer.

It carries out the reaction 5-amino-1-(5-phospho-beta-D-ribosyl)imidazole + hydrogencarbonate + ATP = 5-carboxyamino-1-(5-phospho-D-ribosyl)imidazole + ADP + phosphate + 2 H(+). Its pathway is purine metabolism; IMP biosynthesis via de novo pathway; 5-amino-1-(5-phospho-D-ribosyl)imidazole-4-carboxylate from 5-amino-1-(5-phospho-D-ribosyl)imidazole (N5-CAIR route): step 1/2. Catalyzes the ATP-dependent conversion of 5-aminoimidazole ribonucleotide (AIR) and HCO(3)(-) to N5-carboxyaminoimidazole ribonucleotide (N5-CAIR). This Staphylococcus epidermidis (strain ATCC 12228 / FDA PCI 1200) protein is N5-carboxyaminoimidazole ribonucleotide synthase.